A 309-amino-acid chain; its full sequence is MSQNLESVKNLLVFLGKSLLSVLEALLFHVISKPRKNVAGEIVLITGAGSGLGRLLALQFARLGAVLVLWDVNKEANDETHQLAREAGAARVHAYTCDCSRREEVYRVADQVKKEVGDVSILINNAGIVTGRNFLDCPDDLMEKSFDVNFKAHLWMYKAFLPAMIANNHGHLVCISSSAGLIGVNGLSDYCASKFAALGFAESMFIETLAKKQWGIKTTIVCPFFIKTGMFEGCTTKCPTLLPILDPEYAVRKIIDAILQEQLYLYMPKFLYFIVFLKSILPIKTGILIADYLGVFHMTEGFTGQKKKT.

The helical transmembrane segment at 11 to 31 (LLVFLGKSLLSVLEALLFHVI) threads the bilayer. 44–68 (LITGAGSGLGRLLALQFARLGAVLV) contacts NADP(+). Ser177 is a substrate binding site. Tyr190 (proton acceptor) is an active-site residue. A helical membrane pass occupies residues 270 to 290 (FLYFIVFLKSILPIKTGILIA).

Belongs to the short-chain dehydrogenases/reductases (SDR) family.

The protein localises to the endoplasmic reticulum membrane. It catalyses the reaction all-trans-retinol--[retinol-binding protein] + NAD(+) = all-trans-retinal--[retinol-binding protein] + NADH + H(+). It participates in cofactor metabolism; retinol metabolism. Its function is as follows. Oxidoreductase with strong preference for NAD. Active in both the oxidative and reductive directions. Oxidizes all-trans-retinol in all-trans-retinaldehyde. No activity was detected with 11-cis-retinol or 11-cis-retinaldehyde as substrates with either NAD(+)/NADH or NADP(+)/NADPH. The chain is Epidermal retinol dehydrogenase 2 from Mus musculus (Mouse).